Reading from the N-terminus, the 930-residue chain is Probable SapB synthase (930 aa).

Positions 256 to 516 (YTVESALHFS…GSTRADETTR (261 aa)) constitute a Protein kinase domain. ATP contacts are provided by residues 262–270 (LHFSNGGGV) and lysine 285. Aspartate 395 functions as the Proton acceptor in the catalytic mechanism. A helical transmembrane segment spans residues 447–467 (YALACLRIVLFLPLTSLLAVD). Basic and acidic residues predominate over residues 501-527 (GSTRVDGSTRADETTRADETTRLDVTT). Disordered regions lie at residues 501 to 558 (GSTR…RDSM) and 911 to 930 (PFLP…HQEP). Residues 532–546 (APDAARRPAGPVAPV) are compositionally biased toward low complexity. A compositionally biased stretch (basic and acidic residues) spans 547-556 (RPDDWPRSRD).

The protein in the N-terminal section; belongs to the protein kinase superfamily.

It is found in the cell membrane. Required for aerial hyphae formation. Probably involved in processing the precursor of SapB to its mature form. In Streptomyces coelicolor (strain ATCC BAA-471 / A3(2) / M145), this protein is Probable SapB synthase.